The following is a 99-amino-acid chain: DNA-binding protein Fis (99 aa).

Residues 75–94 (QTRAANMLGINRGTLRKKLK) constitute a DNA-binding region (H-T-H motif).

It belongs to the transcriptional regulatory Fis family. Homodimer.

Activates ribosomal RNA transcription. Plays a direct role in upstream activation of rRNA promoters. In Haemophilus influenzae (strain PittEE), this protein is DNA-binding protein Fis.